The chain runs to 126 residues: Desulfoferrodoxin (126 aa).

Residues C10, C13, C29, C30, H49, H69, H75, C116, and H119 each coordinate Fe cation.

This sequence belongs to the desulfoferrodoxin family. Homodimer. It depends on Fe(3+) as a cofactor. Cu(2+) is required as a cofactor.

The catalysed reaction is reduced [rubredoxin] + superoxide + 2 H(+) = oxidized [rubredoxin] + H2O2. Catalyzes the one-electron reduction of superoxide anion radical to hydrogen peroxide at a nonheme ferrous iron center. Plays a fundamental role in case of oxidative stress via its superoxide detoxification activity. This chain is Desulfoferrodoxin (dfx), found in Syntrophotalea carbinolica (strain DSM 2380 / NBRC 103641 / GraBd1) (Pelobacter carbinolicus).